A 103-amino-acid polypeptide reads, in one-letter code: Small ribosomal subunit protein uS10 (103 aa).

Belongs to the universal ribosomal protein uS10 family. Part of the 30S ribosomal subunit.

Involved in the binding of tRNA to the ribosomes. This is Small ribosomal subunit protein uS10 from Hahella chejuensis (strain KCTC 2396).